A 586-amino-acid polypeptide reads, in one-letter code: Phosphomethylpyrimidine synthase (586 aa).

The segment at 1–59 (MKQSVSAEQIELKSSLPGSKKVYVDGPREGMKVPMREIEQSDTNGVPNPPIRVYDTSGP) is disordered. Positions 22–39 (VYVDGPREGMKVPMREIE) are enriched in basic and acidic residues. Substrate is bound by residues asparagine 193, methionine 222, tyrosine 251, histidine 287, 307 to 309 (SRG), 348 to 351 (DGLR), and glutamate 387. Residue histidine 391 participates in Zn(2+) binding. Tyrosine 414 serves as a coordination point for substrate. Histidine 455 is a binding site for Zn(2+). Residues cysteine 535, cysteine 538, and cysteine 543 each contribute to the [4Fe-4S] cluster site.

This sequence belongs to the ThiC family. Requires [4Fe-4S] cluster as cofactor.

The catalysed reaction is 5-amino-1-(5-phospho-beta-D-ribosyl)imidazole + S-adenosyl-L-methionine = 4-amino-2-methyl-5-(phosphooxymethyl)pyrimidine + CO + 5'-deoxyadenosine + formate + L-methionine + 3 H(+). It functions in the pathway cofactor biosynthesis; thiamine diphosphate biosynthesis. Catalyzes the synthesis of the hydroxymethylpyrimidine phosphate (HMP-P) moiety of thiamine from aminoimidazole ribotide (AIR) in a radical S-adenosyl-L-methionine (SAM)-dependent reaction. The protein is Phosphomethylpyrimidine synthase of Bacillus cereus (strain ZK / E33L).